A 283-amino-acid polypeptide reads, in one-letter code: Trafficking protein particle complex subunit 31 (283 aa).

Residues 1 to 16 (MSQRIIQPSASDQQFP) are compositionally biased toward polar residues. Disordered regions lie at residues 1–20 (MSQR…GKSD) and 126–156 (SSKL…RLQE). The span at 126 to 151 (SSKLSNASNSPGMLANSSTATSASAN) shows a compositional bias: low complexity.

The protein belongs to the TRAPP small subunits family. BET3 subfamily. As to quaternary structure, part of the multisubunit TRAPP (transport protein particle) I complex composed of BET3, BET5, TRS20, TRS23, TRS31 and TRS33. Part of the multisubunit TRAPP (transport protein particle) II complex composed of BET3, BET5, TRS20, TRS23, TRS31, TRS33, TRS65, TRS85, TRS120 and TRS130. Part of the multisubunit TRAPP (transport protein particle) III complex composed of BET3, BET5, TRS20, TRS23, TRS31, TRS33 and TRS85.

The protein localises to the golgi apparatus. It is found in the cis-Golgi network. Its subcellular location is the endoplasmic reticulum. It localises to the preautophagosomal structure. In terms of biological role, component of the TRAPP I, TRAPP II and TRAPP III complexes which act as guanine nucleotide exchange factors (GEF) for YPT1. TRAPP I plays a key role in the late stages of endoplasmic reticulum to Golgi traffic. TRAPP II plays a role in intra-Golgi transport. TRAPP III plays a role in autophagosome formation. The chain is Trafficking protein particle complex subunit 31 (TRS31) from Saccharomyces cerevisiae (strain ATCC 204508 / S288c) (Baker's yeast).